The following is a 247-amino-acid chain: Uridylate kinase (247 aa).

Residue 17–20 (KFSG) coordinates ATP. A UMP-binding site is contributed by glycine 59. ATP contacts are provided by glycine 60 and arginine 64. Residues aspartate 79 and 140–147 (TGNPFFTT) each bind UMP. Threonine 167, tyrosine 173, and aspartate 176 together coordinate ATP.

Belongs to the UMP kinase family. Homohexamer.

Its subcellular location is the cytoplasm. The catalysed reaction is UMP + ATP = UDP + ADP. Its pathway is pyrimidine metabolism; CTP biosynthesis via de novo pathway; UDP from UMP (UMPK route): step 1/1. With respect to regulation, inhibited by UTP. Its function is as follows. Catalyzes the reversible phosphorylation of UMP to UDP. The polypeptide is Uridylate kinase (Legionella pneumophila (strain Lens)).